The following is a 378-amino-acid chain: Dof zinc finger protein 1 (378 aa).

Over residues 28–38 (GANPNPAATAP) the composition is skewed to low complexity. The interval 28–79 (GANPNPAATAPSSVTGGALRGGGGGGAPPVAGGAGAGSTERRARPQKEKALN) is disordered. Gly residues predominate over residues 45 to 63 (ALRGGGGGGAPPVAGGAGA). The segment covering 66-77 (TERRARPQKEKA) has biased composition (basic and acidic residues). The Dof-type zinc-finger motif lies at 78 to 132 (LNCPRCNSTNTKFCYYNNYSLQQPRYFCKTCRRYWTEGGSLRNVPVGGGSRKNKR). Zn(2+) is bound by residues C80, C83, C105, and C108. 3 disordered regions span residues 116-148 (GSLR…ASTA), 203-222 (SLES…NGRG), and 316-378 (LKPT…GTSW). Over residues 133-148 (SSSSAASASPASASTA) the composition is skewed to low complexity. 3 stretches are compositionally biased toward gly residues: residues 323 to 338 (GTGG…GVDG), 350 to 361 (AGGGGGGPGGHD), and 369 to 378 (MIGGGSGTSW).

Its subcellular location is the nucleus. Its function is as follows. Transcription factor that may transactivate seed storage protein genes in developing seeds. This chain is Dof zinc finger protein 1, found in Oryza sativa subsp. japonica (Rice).